Consider the following 161-residue polypeptide: Pleiotrophin-B (161 aa).

The N-terminal stretch at 1–23 (MHHQHGLFMLALLAFLLVMTVLG) is a signal peptide. Cystine bridges form between cysteine 41-cysteine 70, cysteine 49-cysteine 79, cysteine 56-cysteine 83, cysteine 93-cysteine 125, and cysteine 103-cysteine 135. Chondroitin sulfate binding regions lie at residues 86-93 (KKQFGAEC) and 117-125 (KRALHNAEC). The disordered stretch occupies residues 136 to 161 (GKVTKPKLQESKKKKKEGKNKEKLLD). The chondroitin sulfate A binding stretch occupies residues 141 to 161 (PKLQESKKKKKEGKNKEKLLD).

The protein belongs to the pleiotrophin family. Expressed in high levels in brain and eye. Lower levels in bone. In the tailbud embryo stage, it is expressed exclusively in the central nervous system, especially in the hind region of the brain.

It localises to the secreted. In terms of biological role, secreted growth factor that mediates its signal through cell-surface proteoglycan and non-proteoglycan receptors. Binds cell-surface proteoglycan receptor via their chondroitin sulfate (CS) groups. Thereby regulates many processes like cell proliferation, cell survival, cell growth, cell differentiation and cell migration. Has antibacterial activity against both Gram-positive and Gram-negative bacteria. The chain is Pleiotrophin-B (ptn-b) from Xenopus laevis (African clawed frog).